The following is a 123-amino-acid chain: Small ribosomal subunit protein uS12 (123 aa).

Asp-89 is modified (3-methylthioaspartic acid).

Belongs to the universal ribosomal protein uS12 family. Part of the 30S ribosomal subunit. Contacts proteins S8 and S17. May interact with IF1 in the 30S initiation complex.

In terms of biological role, with S4 and S5 plays an important role in translational accuracy. Its function is as follows. Interacts with and stabilizes bases of the 16S rRNA that are involved in tRNA selection in the A site and with the mRNA backbone. Located at the interface of the 30S and 50S subunits, it traverses the body of the 30S subunit contacting proteins on the other side and probably holding the rRNA structure together. The combined cluster of proteins S8, S12 and S17 appears to hold together the shoulder and platform of the 30S subunit. The sequence is that of Small ribosomal subunit protein uS12 from Rhodopseudomonas palustris (strain BisB18).